A 310-amino-acid polypeptide reads, in one-letter code: Olfactory receptor 2A1/2A42 (310 aa).

Residues 1–24 (MGENQTMVTEFLLLGFLLGPRIQM) are Extracellular-facing. An N-linked (GlcNAc...) asparagine glycan is attached at N4. The helical transmembrane segment at 25–48 (LLFGLFSLFYIFTLLGNGAILGLI) threads the bilayer. At 49–56 (SLDSRLHT) the chain is on the cytoplasmic side. A helical membrane pass occupies residues 57–78 (PMYFFLSHLAVVDIAYTRNTVP). At 79–99 (QMLANLLHPAKPISFAGCMTQ) the chain is on the extracellular side. An intrachain disulfide couples C96 to C188. Residues 100 to 119 (TFLCLSFGHSECLLLVLMSY) form a helical membrane-spanning segment. Residues 120–138 (DRYVAICHPLRYSVIMTWR) are Cytoplasmic-facing. Residues 139 to 157 (VCITLAVTSWTCGSLLALA) form a helical membrane-spanning segment. At 158-195 (HVVLILRLPFSGPHEINHFFCEILSVLRLACADTWLNQ) the chain is on the extracellular side. The chain crosses the membrane as a helical span at residues 196 to 218 (VVIFAACVFFLVGPPSLVLVSYS). Topologically, residues 219 to 235 (HILAAILRIQSGEGRRK) are cytoplasmic. A helical transmembrane segment spans residues 236-258 (AFSTCSSHLCVVGLFFGSAIIMY). The Extracellular portion of the chain corresponds to 259 to 271 (MAPKSRHPEEQQK). The chain crosses the membrane as a helical span at residues 272–291 (VFFLFYSFFNPTLNPLIYSL). Topologically, residues 292–310 (RNGEVKGALRRALGKESHS) are cytoplasmic.

This sequence belongs to the G-protein coupled receptor 1 family.

It localises to the cell membrane. Its function is as follows. Odorant receptor. This chain is Olfactory receptor 2A1/2A42 (OR2A1), found in Homo sapiens (Human).